The following is an 83-amino-acid chain: Late seed maturation protein P8B6 (83 aa).

Composition is skewed to basic and acidic residues over residues 1–18 (MASQ…KKGE) and 37–51 (AEGR…KEQL). The tract at residues 1-83 (MASQQEKKQL…DAEDEPSTRT (83 aa)) is disordered. The span at 73 to 83 (EDAEDEPSTRT) shows a compositional bias: acidic residues.

The protein belongs to the small hydrophilic plant seed protein family.

It localises to the cytoplasm. This protein may play a role in equipping the seed for survival, maintaining a minimal level of hydration in the dry organism and preventing the denaturation of cytoplasmic components, or may play a role during imbibition by controlling water uptake. This is Late seed maturation protein P8B6 from Raphanus sativus (Radish).